We begin with the raw amino-acid sequence, 621 residues long: Probable serine/threonine-protein kinase WNK2 (621 aa).

Residues 28 to 286 (GRYTEVLGKG…AQELLMDPFL (259 aa)) form the Protein kinase domain. ATP is bound by residues 108 to 111 (TEVF) and Lys-158. Asp-175 acts as the Proton acceptor in catalysis. Disordered regions lie at residues 438–490 (SVEN…SDSP), 501–520 (VEPH…NDTD), 527–553 (GTSV…SPQS), and 600–621 (HREE…SDKP).

The protein belongs to the protein kinase superfamily. Ser/Thr protein kinase family. WNK subfamily.

It catalyses the reaction L-seryl-[protein] + ATP = O-phospho-L-seryl-[protein] + ADP + H(+). The enzyme catalyses L-threonyl-[protein] + ATP = O-phospho-L-threonyl-[protein] + ADP + H(+). This Oryza sativa subsp. japonica (Rice) protein is Probable serine/threonine-protein kinase WNK2 (WNK2).